The sequence spans 320 residues: Ferrochelatase (320 aa).

The Fe cation site is built by His194 and Glu275.

Belongs to the ferrochelatase family.

It localises to the cytoplasm. It catalyses the reaction heme b + 2 H(+) = protoporphyrin IX + Fe(2+). Its pathway is porphyrin-containing compound metabolism; protoheme biosynthesis; protoheme from protoporphyrin-IX: step 1/1. Catalyzes the ferrous insertion into protoporphyrin IX. This chain is Ferrochelatase, found in Enterobacter sp. (strain 638).